The sequence spans 1161 residues: Lateral signaling target protein 2 homolog (1161 aa).

Disordered stretches follow at residues 417–510, 583–831, 890–918, 935–978, 992–1014, and 1029–1095; these read ATGS…EVDD, AAGS…PTQS, MNSSPPEPDEPPEPSGSEEESKDSQHNHP, DQQN…SVES, SSPVGAGGAGGGGMVGGSRTGQE, and GKAS…EPPR. Gly residues predominate over residues 419-429; that stretch reads GSSGFGSGRGG. The span at 438–453 shows a compositional bias: basic residues; that stretch reads PKQRHNQAHLRQRGAP. The segment covering 468–487 has biased composition (basic and acidic residues); that stretch reads GDDREPVVEEDNNNHLRKEI. Residues 488-510 are compositionally biased toward acidic residues; the sequence is EEEDVDDDMEEEEEDEEEDEVDD. Low complexity predominate over residues 583–601; that stretch reads AAGSGGQQQQQQQQQLIDS. Acidic residues predominate over residues 669 to 704; sequence SDYEEADVDDEPDDVDADDDDEEEDDVVGEVEEQND. Basic residues predominate over residues 728-742; that stretch reads KAARNHRKSSHHRPR. The span at 743–757 shows a compositional bias: low complexity; it reads PSTSSSSSSAAYRNK. Residues 758–773 are compositionally biased toward basic residues; it reads SQSHQHHHHHHHHHHH. Composition is skewed to low complexity over residues 781 to 800 and 807 to 831; these read GTSSVVSTITTSNNSTSNGS and MQQQHQQHQQQRNSSSSCDTSPTQS. Acidic residues predominate over residues 896-910; it reads EPDEPPEPSGSEEES. 2 stretches are compositionally biased toward polar residues: residues 935-948 and 956-967; these read DQQNHSGGSSQSIY and EQDSVFGSSGDS. Positions 996–1010 are enriched in gly residues; it reads GAGGAGGGGMVGGSR. Residues 1054–1065 show a composition bias toward low complexity; that stretch reads SRSSPSSPVNSN. Basic and acidic residues predominate over residues 1081-1094; that stretch reads TAHEQQRRMPEEPP. An FYVE-type zinc finger spans residues 1099–1159; sequence DCDAPRCMAC…VCRDCYIHEV (61 aa). C1105, C1108, C1121, C1124, C1129, C1132, C1151, and C1154 together coordinate Zn(2+).

It belongs to the lst-2 family.

Functionally, negative regulator of epidermal growth factor receptor (EGFR) signaling. This Anopheles gambiae (African malaria mosquito) protein is Lateral signaling target protein 2 homolog.